The following is a 144-amino-acid chain: Bacilliredoxin BCE33L1972 (144 aa).

Belongs to the bacilliredoxin family.

The protein is Bacilliredoxin BCE33L1972 of Bacillus cereus (strain ZK / E33L).